The sequence spans 145 residues: Basic leucine zipper 1 (145 aa).

Polar residues predominate over residues 1–11 (MANAEKTSSGS). The disordered stretch occupies residues 1–39 (MANAEKTSSGSDIDEKKRKRKLSNRESARRSRLKKQKLM). The 64-residue stretch at 14–77 (DEKKRKRKLS…DSVETENAGL (64 aa)) folds into the bZIP domain. The interval 16 to 37 (KKRKRKLSNRESARRSRLKKQK) is basic motif. The interval 46–53 (ISSLERRI) is leucine-zipper.

This sequence belongs to the bZIP family. Interacts with ZFP7, BZIP4, BZIP9, BZIP10, BZIP11, BZIP25, BZIP42, BZIP44, BZIP53, BZIP58 and BZIP63. As to expression, expressed in both shoots, including young leaves, stipulae and trichomes (except in cotyledons and hypocotyl), and roots, including vascular tissues (e.g. in both the phloem and the xylem). Present in seeds and pollen. Restricted to vasculatures and roots in the presence of sucrose or glucose.

The protein localises to the nucleus. Functionally, transcription factor that binds to the C-box-like motif (5'-TGCTGACGTCA-3') and G-box-like motif (5'-CCACGTGGCC-3'), ABRE elements, of gene promoters involved in sugar signaling. Activated by low energy stress both at transcriptional and post-transcriptional mechanisms. Promotes dark-induced senescence and participates in the transcriptional reprogramming of amino acid metabolism during the dark-induced starvation response. Transcription activator of the mannan synthase CSLA9. Recognizes and binds to DNA-specific sequence of CSLA9 promoter. This Arabidopsis thaliana (Mouse-ear cress) protein is Basic leucine zipper 1 (BZIP1).